We begin with the raw amino-acid sequence, 81 residues long: Acyl carrier protein (81 aa).

Residues 1–79 (MDVAAMQVKI…DIFDYLAKNK (79 aa)) enclose the Carrier domain. The residue at position 39 (S39) is an O-(pantetheine 4'-phosphoryl)serine.

The protein belongs to the acyl carrier protein (ACP) family. Post-translationally, 4'-phosphopantetheine is transferred from CoA to a specific serine of apo-ACP by AcpS. This modification is essential for activity because fatty acids are bound in thioester linkage to the sulfhydryl of the prosthetic group.

The protein localises to the cytoplasm. The protein operates within lipid metabolism; fatty acid biosynthesis. Its function is as follows. Carrier of the growing fatty acid chain in fatty acid biosynthesis. The polypeptide is Acyl carrier protein (Syntrophobacter fumaroxidans (strain DSM 10017 / MPOB)).